A 388-amino-acid chain; its full sequence is Succinate--CoA ligase [ADP-forming] subunit beta (388 aa).

The 236-residue stretch at 9-244 (KQLFREYGLP…TTQDDEREMH (236 aa)) folds into the ATP-grasp domain. Residues K46, 53–55 (GRG), E99, S102, and E107 each bind ATP. Mg(2+)-binding residues include N199 and D213. Substrate contacts are provided by residues N264 and 321–323 (GIV).

This sequence belongs to the succinate/malate CoA ligase beta subunit family. As to quaternary structure, heterotetramer of two alpha and two beta subunits. It depends on Mg(2+) as a cofactor.

The enzyme catalyses succinate + ATP + CoA = succinyl-CoA + ADP + phosphate. It catalyses the reaction GTP + succinate + CoA = succinyl-CoA + GDP + phosphate. The protein operates within carbohydrate metabolism; tricarboxylic acid cycle; succinate from succinyl-CoA (ligase route): step 1/1. Succinyl-CoA synthetase functions in the citric acid cycle (TCA), coupling the hydrolysis of succinyl-CoA to the synthesis of either ATP or GTP and thus represents the only step of substrate-level phosphorylation in the TCA. The beta subunit provides nucleotide specificity of the enzyme and binds the substrate succinate, while the binding sites for coenzyme A and phosphate are found in the alpha subunit. In Psychromonas ingrahamii (strain DSM 17664 / CCUG 51855 / 37), this protein is Succinate--CoA ligase [ADP-forming] subunit beta.